The following is a 202-amino-acid chain: FMN-dependent NADH:quinone oxidoreductase (202 aa).

FMN contacts are provided by residues serine 10, 16–18, and 96–99; these read SAS and MWNF.

It belongs to the azoreductase type 1 family. As to quaternary structure, homodimer. FMN is required as a cofactor.

The enzyme catalyses 2 a quinone + NADH + H(+) = 2 a 1,4-benzosemiquinone + NAD(+). It catalyses the reaction N,N-dimethyl-1,4-phenylenediamine + anthranilate + 2 NAD(+) = 2-(4-dimethylaminophenyl)diazenylbenzoate + 2 NADH + 2 H(+). In terms of biological role, quinone reductase that provides resistance to thiol-specific stress caused by electrophilic quinones. Its function is as follows. Also exhibits azoreductase activity. Catalyzes the reductive cleavage of the azo bond in aromatic azo compounds to the corresponding amines. In Beijerinckia indica subsp. indica (strain ATCC 9039 / DSM 1715 / NCIMB 8712), this protein is FMN-dependent NADH:quinone oxidoreductase.